Reading from the N-terminus, the 585-residue chain is Probable glucomannan 4-beta-mannosyltransferase 7 (585 aa).

A helical membrane pass occupies residues valine 87 to valine 107. Aspartate 188 is a catalytic residue. Aspartate 247 and aspartate 249 together coordinate substrate. The active site involves aspartate 341. The next 4 helical transmembrane spans lie at valine 420 to isoleucine 440, leucine 443 to isoleucine 463, leucine 534 to histidine 554, and leucine 563 to cysteine 583.

This sequence belongs to the glycosyltransferase 2 family. Plant cellulose synthase-like A subfamily.

The protein resides in the golgi apparatus membrane. The catalysed reaction is GDP-mannose + (glucomannan)n = GDP + (glucomannan)n+1.. Its function is as follows. Probable mannan synthase which consists of a 4-beta-mannosyltransferase activity on mannan using GDP-mannose. The beta-1,4-mannan product is the backbone for galactomannan synthesis by galactomannan galactosyltransferase. Galactomannan is a noncellulosic polysaccharides of plant cell wall. The chain is Probable glucomannan 4-beta-mannosyltransferase 7 from Oryza sativa subsp. japonica (Rice).